Reading from the N-terminus, the 112-residue chain is Protein FAM32A (112 aa).

Residues 23 to 56 (TKRKKKKKDKDKAKMLEAMGTSKKNEEEKRRCLD) form a disordered region. Over residues 45–56 (KKNEEEKRRCLD) the composition is skewed to basic and acidic residues.

The protein belongs to the FAM32 family.

It is found in the nucleus. Functionally, may induce G2 arrest and apoptosis. May also increase cell sensitivity to apoptotic stimuli. The chain is Protein FAM32A (Fam32a) from Rattus norvegicus (Rat).